The sequence spans 198 residues: Translation machinery-associated protein 22 (198 aa).

The SUI1 domain occupies 99–170 (VIIKREARTK…EVETYIHSLL (72 aa)).

It belongs to the DENR family. Interacts with the 40S ribosomal subunit.

It localises to the cytoplasm. The chain is Translation machinery-associated protein 22 (TMA22) from Saccharomyces cerevisiae (strain YJM789) (Baker's yeast).